The sequence spans 21 residues: Large ribosomal subunit protein uL10 (21 aa).

It belongs to the universal ribosomal protein uL10 family. Part of the ribosomal stalk of the 50S ribosomal subunit. The N-terminus interacts with L11 and the large rRNA to form the base of the stalk. The C-terminus forms an elongated spine to which L12 dimers bind in a sequential fashion forming a multimeric L10(L12)X complex.

In terms of biological role, forms part of the ribosomal stalk, playing a central role in the interaction of the ribosome with GTP-bound translation factors. The protein is Large ribosomal subunit protein uL10 (rplJ) of Bacillus cereus.